Here is a 290-residue protein sequence, read N- to C-terminus: Xylanase inhibitor protein 2 (290 aa).

A signal peptide spans 1–27 (MGLVHALLPFAAAAALLLLAAPPPATA). The region spanning 30-290 (PGLAVYWGRH…DKKANYTGEG (261 aa)) is the GH18 domain. Residues Cys49 and Cys89 are joined by a disulfide bond. Residue Asn112 is glycosylated (N-linked (GlcNAc...) asparagine). Cys187 and Cys216 are joined by a disulfide. An N-linked (GlcNAc...) asparagine glycan is attached at Asn285.

It belongs to the glycosyl hydrolase 18 family. Xylanase inhibitor subfamily. As to quaternary structure, binds to fungal GH10 xylanases.

Its subcellular location is the secreted. In terms of biological role, fungal xylanase inhibitor. Possesses competitive inhibiting activity against several fungal endo-1,4-beta-D-xylanases belonging to glycoside hydrolase family 10 (GH10) and family 11 (GH11). May function in plant defense against secreted fungal pathogen xylanases. Is similar to class III chitinases, but does not exhibit chitinase activity. The chain is Xylanase inhibitor protein 2 from Oryza sativa subsp. japonica (Rice).